We begin with the raw amino-acid sequence, 410 residues long: Dihydrolipoyllysine-residue succinyltransferase component of 2-oxoglutarate dehydrogenase complex (410 aa).

The Lipoyl-binding domain occupies 3–81 (IINIFIPDLP…QVIGTLLKIG (79 aa)). Lys44 bears the N6-lipoyllysine mark. Residues 112–150 (TYSPTVRRLISMHDLRDVDIIQGTGTKNRLTRKDILNYL) enclose the Peripheral subunit-binding (PSBD) domain. Active-site residues include His381 and Asp385.

This sequence belongs to the 2-oxoacid dehydrogenase family. As to quaternary structure, forms a 24-polypeptide structural core with octahedral symmetry. Part of the 2-oxoglutarate dehydrogenase (OGDH) complex composed of E1 (2-oxoglutarate dehydrogenase), E2 (dihydrolipoamide succinyltransferase) and E3 (dihydrolipoamide dehydrogenase); the complex contains multiple copies of the three enzymatic components (E1, E2 and E3). (R)-lipoate is required as a cofactor.

The catalysed reaction is N(6)-[(R)-dihydrolipoyl]-L-lysyl-[protein] + succinyl-CoA = N(6)-[(R)-S(8)-succinyldihydrolipoyl]-L-lysyl-[protein] + CoA. The protein operates within amino-acid degradation; L-lysine degradation via saccharopine pathway; glutaryl-CoA from L-lysine: step 6/6. Functionally, E2 component of the 2-oxoglutarate dehydrogenase (OGDH) complex which catalyzes the second step in the conversion of 2-oxoglutarate to succinyl-CoA and CO(2). The polypeptide is Dihydrolipoyllysine-residue succinyltransferase component of 2-oxoglutarate dehydrogenase complex (sucB) (Buchnera aphidicola subsp. Baizongia pistaciae (strain Bp)).